The sequence spans 396 residues: Obg-like ATPase 1 (396 aa).

Residues 23–283 form the OBG-type G domain; the sequence is LKIGIVGLPN…LSAEERQKYL (261 aa). Residue 32-37 participates in ATP binding; that stretch reads NVGKST. 2 residues coordinate Mg(2+): Ser-36 and Thr-56. Leu-231 serves as a coordination point for ATP. The short motif at 267–274 is the Nuclear export signal element; sequence LELKLQEL. Lys-294 is subject to N6-acetyllysine. One can recognise a TGS domain in the interval 304 to 387; the sequence is QLEYFFTAGP…EDGDIIFFKF (84 aa).

It belongs to the TRAFAC class OBG-HflX-like GTPase superfamily. OBG GTPase family. YchF/OLA1 subfamily. In terms of assembly, monomer. Mg(2+) is required as a cofactor.

The protein resides in the cytoplasm. It localises to the nucleus. It is found in the nucleolus. In terms of biological role, hydrolyzes ATP, and can also hydrolyze GTP with lower efficiency. Has lower affinity for GTP. This is Obg-like ATPase 1 from Pongo abelii (Sumatran orangutan).